Here is a 434-residue protein sequence, read N- to C-terminus: Putative B3 domain-containing protein Os04g0347400 (434 aa).

3 consecutive DNA-binding regions (TF-B3) follow at residues 27–124 (SFHK…FDTT), 150–246 (KPQF…FGIN), and 326–432 (WIKK…DRVE).

The protein localises to the nucleus. The protein is Putative B3 domain-containing protein Os04g0347400 of Oryza sativa subsp. japonica (Rice).